Consider the following 546-residue polypeptide: MPDERGAIFTRREVVEFILDLVGYTEDRDLAQTKLLEPSAGHADFLLPIIGRLVRSYVAHGGDLTRGAQTLGPAIRAYEVHESSLETARSVVVAELLRLGVKKAAADGLGRTWLVRADFLMAPLPHTFDFVVGNPPYVRQELIPAVLLARYRARFKTLYDRADLYIPFYERCLDVLAPGGRLGFICTDRWTKNKYGGPLRAMVSEEFSLTHFVDLVDTQAFLSNVMTYPAITVIERPKPKSKARPTRVAYRPAISAEVFGPLAKAMTGTKLNHKAGVVEMSGVVNGSEPWILHQADRLALVRRLEETLPTLEEAGCKVGIGVATGNDGVYIGDMKTLNVEPSRKLPLARTQDLRGGSIDWQGKGVLNPFEEDGQVVDLASYPKFAAYLQEHAIQIKARHVAKKNPERWFRTIDRIYPALAKTPKLLVPDIKGDAHIVYEEGKLYPHHNLYFITANEWDLRALQAVLMSGVARLFVGTYSTTMRGGFLRFQAQYLRRIRVPHWKNVPKPLQKALREAAVAGDREAANRATYQLYGLNEAERDIVATV.

The protein belongs to the N(4)/N(6)-methyltransferase family.

The catalysed reaction is a 2'-deoxyadenosine in DNA + S-adenosyl-L-methionine = an N(6)-methyl-2'-deoxyadenosine in DNA + S-adenosyl-L-homocysteine + H(+). A gamma subtype methylase, recognizes the double-stranded sequence 5'-CTCGAG-3', methylates A-5 on both strands, and protects the DNA from cleavage by the XhoI endonuclease. This Xanthomonas vasicola protein is Type II methyltransferase M.XhoI.